The sequence spans 673 residues: UvrABC system protein B (673 aa).

Residues 25-413 enclose the Helicase ATP-binding domain; the sequence is EGIESGLAHQ…GSDIAEQVVR (389 aa). Position 38–45 (38–45) interacts with ATP; the sequence is GVTGSGKT. Positions 91 to 114 match the Beta-hairpin motif; that stretch reads YYDYYQPEAYVPTTDTFIEKDASV. A Helicase C-terminal domain is found at 430–583; it reads QVDDLLSEIN…QHQYNLDNNI (154 aa). Residues 634–669 form the UVR domain; that stretch reads DTKIVELEKLMQGHAQNLEFEQAAAMRDKIAKLRIQ.

It belongs to the UvrB family. In terms of assembly, forms a heterotetramer with UvrA during the search for lesions. Interacts with UvrC in an incision complex.

The protein resides in the cytoplasm. Functionally, the UvrABC repair system catalyzes the recognition and processing of DNA lesions. A damage recognition complex composed of 2 UvrA and 2 UvrB subunits scans DNA for abnormalities. Upon binding of the UvrA(2)B(2) complex to a putative damaged site, the DNA wraps around one UvrB monomer. DNA wrap is dependent on ATP binding by UvrB and probably causes local melting of the DNA helix, facilitating insertion of UvrB beta-hairpin between the DNA strands. Then UvrB probes one DNA strand for the presence of a lesion. If a lesion is found the UvrA subunits dissociate and the UvrB-DNA preincision complex is formed. This complex is subsequently bound by UvrC and the second UvrB is released. If no lesion is found, the DNA wraps around the other UvrB subunit that will check the other stand for damage. The polypeptide is UvrABC system protein B (Colwellia psychrerythraea (strain 34H / ATCC BAA-681) (Vibrio psychroerythus)).